We begin with the raw amino-acid sequence, 261 residues long: Type III pantothenate kinase (261 aa).

Residue 6-13 (DVGNTNAK) coordinates ATP. 108 to 111 (GADR) is a binding site for substrate. The active-site Proton acceptor is Asp-110. Thr-134 lines the ATP pocket. Residue Thr-188 coordinates substrate.

This sequence belongs to the type III pantothenate kinase family. As to quaternary structure, homodimer. The cofactor is NH4(+). K(+) serves as cofactor.

It localises to the cytoplasm. It carries out the reaction (R)-pantothenate + ATP = (R)-4'-phosphopantothenate + ADP + H(+). Its pathway is cofactor biosynthesis; coenzyme A biosynthesis; CoA from (R)-pantothenate: step 1/5. Its function is as follows. Catalyzes the phosphorylation of pantothenate (Pan), the first step in CoA biosynthesis. The chain is Type III pantothenate kinase from Sphingopyxis alaskensis (strain DSM 13593 / LMG 18877 / RB2256) (Sphingomonas alaskensis).